A 414-amino-acid polypeptide reads, in one-letter code: Gamma-glutamyl phosphate reductase (414 aa).

It belongs to the gamma-glutamyl phosphate reductase family.

The protein resides in the cytoplasm. It carries out the reaction L-glutamate 5-semialdehyde + phosphate + NADP(+) = L-glutamyl 5-phosphate + NADPH + H(+). The protein operates within amino-acid biosynthesis; L-proline biosynthesis; L-glutamate 5-semialdehyde from L-glutamate: step 2/2. Catalyzes the NADPH-dependent reduction of L-glutamate 5-phosphate into L-glutamate 5-semialdehyde and phosphate. The product spontaneously undergoes cyclization to form 1-pyrroline-5-carboxylate. The chain is Gamma-glutamyl phosphate reductase from Xanthomonas campestris pv. campestris (strain 8004).